The sequence spans 527 residues: Rhamnogalacturonate lyase A (527 aa).

Residues Met-1–Ala-19 form the signal peptide. Cystine bridges form between Cys-49-Cys-92 and Cys-183-Cys-192. Asn-350 carries N-linked (GlcNAc...) asparagine glycosylation.

It belongs to the polysaccharide lyase 4 family.

The protein localises to the secreted. The catalysed reaction is Endotype eliminative cleavage of L-alpha-rhamnopyranosyl-(1-&gt;4)-alpha-D-galactopyranosyluronic acid bonds of rhamnogalacturonan I domains in ramified hairy regions of pectin leaving L-rhamnopyranose at the reducing end and 4-deoxy-4,5-unsaturated D-galactopyranosyluronic acid at the non-reducing end.. Functionally, pectinolytic enzyme that has a positive effect in the apple hot-mash liquefaction process. This endolyase hydrolyzes the alpha-L-rhamnopyranosyl-(1,4)-alpha-D-galacturonopyranosyl glycosidic linkage by beta-elimination, thereby generating oligosaccharides terminating at the non-reducing end with a hex-4-enopyranosyluronic acid residue. This is Rhamnogalacturonate lyase A (rglA) from Aspergillus aculeatus.